A 209-amino-acid polypeptide reads, in one-letter code: Protein phosphotransferase ChpT (209 aa).

Residue H22 is modified to Phosphohistidine.

It belongs to the ChpT phosphotransferase family. As to quaternary structure, homodimer. Forms an asymmetric heterotetramer with CtrA (2:2). There are at least two modes of interaction between ChpT and CtrA, only one of which is competent to catalyze His-Asp phosphoryl transfer. Post-translationally, is phosphorylated by CckA-P on His-22.

Its subcellular location is the cytoplasm. Component of a regulatory phosphorelay system that controls B.abortus cell growth, division, and intracellular survival inside mammalian host cells. This signaling pathway is composed of CckA, ChpT, CtrA and CpdR. ChpT efficiently and specifically shuttles phosphoryl groups from the CckA kinase to the receiver domains of both CtrA and CpdR. Does not bind ATP. Overexpression of chpT results in a defect in cell morphology, DNA content, and intracellular survival in human macrophages. The chain is Protein phosphotransferase ChpT from Brucella abortus (strain 2308).